Consider the following 415-residue polypeptide: Ornithine cyclodeaminase (415 aa).

NAD(+)-binding residues include asparagine 241, alanine 242, aspartate 320, threonine 352, leucine 354, histidine 355, aspartate 373, aspartate 396, and valine 397.

Belongs to the AgrE/ArgZ ornithine cyclodeaminase family. NAD(+) serves as cofactor.

The catalysed reaction is L-ornithine = L-proline + NH4(+). Catalyzes the conversion of ornithine to proline, with the release of ammonia. The chain is Ornithine cyclodeaminase from Methanococcus maripaludis (strain DSM 14266 / JCM 13030 / NBRC 101832 / S2 / LL).